We begin with the raw amino-acid sequence, 77 residues long: Putative Fis-like DNA-binding protein (77 aa).

Residues 53 to 72 constitute a DNA-binding region (H-T-H motif); sequence QSLAADYLGINRNTLRKKLQ.

The protein belongs to the transcriptional regulatory Fis family.

This Ralstonia nicotianae (strain ATCC BAA-1114 / GMI1000) (Ralstonia solanacearum) protein is Putative Fis-like DNA-binding protein.